Here is a 349-residue protein sequence, read N- to C-terminus: UPF0283 membrane protein Ent638_2153 (349 aa).

A run of 3 helical transmembrane segments spans residues 70 to 90, 99 to 119, and 213 to 233; these read MVTA…VQWT, WVAL…VGSV, and ESTL…FIAW.

The protein belongs to the UPF0283 family.

It is found in the cell inner membrane. In Enterobacter sp. (strain 638), this protein is UPF0283 membrane protein Ent638_2153.